Here is a 355-residue protein sequence, read N- to C-terminus: Peptide chain release factor 1 (355 aa).

The residue at position 233 (Gln-233) is an N5-methylglutamine.

This sequence belongs to the prokaryotic/mitochondrial release factor family. In terms of processing, methylated by PrmC. Methylation increases the termination efficiency of RF1.

The protein resides in the cytoplasm. Its function is as follows. Peptide chain release factor 1 directs the termination of translation in response to the peptide chain termination codons UAG and UAA. This Dehalococcoides mccartyi (strain ATCC BAA-2100 / JCM 16839 / KCTC 5957 / BAV1) protein is Peptide chain release factor 1.